Here is a 213-residue protein sequence, read N- to C-terminus: Ribonuclease HII (213 aa).

An RNase H type-2 domain is found at 18-213 (GLYAGVDEVG…RPVKERLAKN (196 aa)). A divalent metal cation-binding residues include aspartate 24, glutamate 25, and aspartate 116.

It belongs to the RNase HII family. It depends on Mn(2+) as a cofactor. Mg(2+) is required as a cofactor.

It localises to the cytoplasm. The catalysed reaction is Endonucleolytic cleavage to 5'-phosphomonoester.. Its function is as follows. Endonuclease that specifically degrades the RNA of RNA-DNA hybrids. This Shewanella sediminis (strain HAW-EB3) protein is Ribonuclease HII.